The primary structure comprises 436 residues: Eukaryotic translation initiation factor 5 (436 aa).

27–34 (GKGNGIKT) is a binding site for GTP. Residues 177 to 203 (NSDKGSSNDDDDDDWEPEPVEPNGMLS) form a disordered region. Positions 184–195 (NDDDDDDWEPEP) are enriched in acidic residues. The region spanning 216–379 (EKSEEQRLDM…KEAEEETEEE (164 aa)) is the W2 domain. A compositionally biased stretch (basic and acidic residues) spans 396 to 408 (LRQQKEKAAREAQ). The segment at 396-436 (LRQQKEKAAREAQQKSAKATNGNAAAASGANDEEDLDIDDI) is disordered. A compositionally biased stretch (low complexity) spans 409-425 (QKSAKATNGNAAAASGA). The span at 426–436 (NDEEDLDIDDI) shows a compositional bias: acidic residues.

This sequence belongs to the eIF-2-beta/eIF-5 family.

Functionally, catalyzes the hydrolysis of GTP bound to the 40S ribosomal initiation complex (40S.mRNA.Met-tRNA[F].eIF-2.GTP) with the subsequent joining of a 60S ribosomal subunit resulting in the release of eIF-2 and the guanine nucleotide. The subsequent joining of a 60S ribosomal subunit results in the formation of a functional 80S initiation complex (80S.mRNA.Met-tRNA[F]). In Caenorhabditis elegans, this protein is Eukaryotic translation initiation factor 5.